A 426-amino-acid chain; its full sequence is Glutamate-1-semialdehyde 2,1-aminomutase (426 aa).

Lysine 264 bears the N6-(pyridoxal phosphate)lysine mark.

It belongs to the class-III pyridoxal-phosphate-dependent aminotransferase family. HemL subfamily. Pyridoxal 5'-phosphate is required as a cofactor.

It is found in the cytoplasm. It catalyses the reaction (S)-4-amino-5-oxopentanoate = 5-aminolevulinate. It functions in the pathway porphyrin-containing compound metabolism; protoporphyrin-IX biosynthesis; 5-aminolevulinate from L-glutamyl-tRNA(Glu): step 2/2. In Methanocella arvoryzae (strain DSM 22066 / NBRC 105507 / MRE50), this protein is Glutamate-1-semialdehyde 2,1-aminomutase.